The chain runs to 101 residues: Integration host factor subunit beta (101 aa).

The protein belongs to the bacterial histone-like protein family. As to quaternary structure, heterodimer of an alpha and a beta chain.

Its function is as follows. This protein is one of the two subunits of integration host factor, a specific DNA-binding protein that functions in genetic recombination as well as in transcriptional and translational control. This is Integration host factor subunit beta from Maricaulis maris (strain MCS10) (Caulobacter maris).